A 500-amino-acid chain; its full sequence is NAD(P)H-quinone oxidoreductase chain 4, chloroplastic (500 aa).

Transmembrane regions (helical) follow at residues Phe-4–Leu-24, Tyr-35–Phe-55, Ile-87–Val-107, Leu-134–Met-154, Phe-167–Leu-187, Val-208–Ile-228, His-242–Ile-262, Ala-272–Ala-292, Ile-305–Asp-325, Gly-330–Gly-350, Leu-386–Thr-406, Leu-411–Ile-431, and Leu-462–Val-482.

It belongs to the complex I subunit 4 family.

It localises to the plastid. Its subcellular location is the chloroplast thylakoid membrane. It catalyses the reaction a plastoquinone + NADH + (n+1) H(+)(in) = a plastoquinol + NAD(+) + n H(+)(out). The enzyme catalyses a plastoquinone + NADPH + (n+1) H(+)(in) = a plastoquinol + NADP(+) + n H(+)(out). This is NAD(P)H-quinone oxidoreductase chain 4, chloroplastic from Solanum tuberosum (Potato).